Reading from the N-terminus, the 130-residue chain is Histone H2A type 1-D (130 aa).

A disordered region spans residues 1 to 22; the sequence is MSGRGKQGGKARAKAKTRSSRA. Ser2 bears the N-acetylserine mark. A Phosphoserine; by RPS6KA5 modification is found at Ser2. At Arg4 the chain carries Citrulline; alternate. At Arg4 the chain carries Symmetric dimethylarginine; by PRMT5; alternate. N6-(2-hydroxyisobutyryl)lysine; alternate occurs at positions 6 and 10. Lys6 is subject to N6-acetyllysine; alternate. The segment covering 7-19 has biased composition (basic residues); the sequence is QGGKARAKAKTRS. Lys10 and Lys14 each carry N6-(beta-hydroxybutyryl)lysine; alternate. At Lys10 the chain carries N6-lactoyllysine; alternate. Lys10 is modified (N6-succinyllysine; alternate). Lys14 is covalently cross-linked (Glycyl lysine isopeptide (Lys-Gly) (interchain with G-Cter in ubiquitin); alternate). A Glycyl lysine isopeptide (Lys-Gly) (interchain with G-Cter in ubiquitin) cross-link involves residue Lys16. Lys37 carries the N6-(2-hydroxyisobutyryl)lysine; alternate modification. Lys37 carries the post-translational modification N6-(beta-hydroxybutyryl)lysine; alternate. Position 37 is an N6-crotonyllysine; alternate (Lys37). Lys75 and Lys76 each carry N6-(2-hydroxyisobutyryl)lysine. The residue at position 96 (Lys96) is an N6-(2-hydroxyisobutyryl)lysine; alternate. Lys96 is modified (N6-(beta-hydroxybutyryl)lysine; alternate). Lys96 bears the N6-succinyllysine; alternate mark. Lys96 is subject to N6-glutaryllysine; alternate. At Lys100 the chain carries N6-glutaryllysine. An N5-methylglutamine modification is found at Gln105. Lys119 carries the N6-(2-hydroxyisobutyryl)lysine; alternate modification. N6-(beta-hydroxybutyryl)lysine; alternate is present on Lys119. N6-crotonyllysine; alternate occurs at positions 119 and 120. N6-glutaryllysine; alternate is present on residues Lys119 and Lys120. Residue Lys120 forms a Glycyl lysine isopeptide (Lys-Gly) (interchain with G-Cter in ubiquitin); alternate linkage. Phosphothreonine; by DCAF1 is present on Thr121. An N6-crotonyllysine; alternate modification is found at Lys126. Lys126 is modified (N6-glutaryllysine; alternate).

Belongs to the histone H2A family. In terms of assembly, the nucleosome is a histone octamer containing two molecules each of H2A, H2B, H3 and H4 assembled in one H3-H4 heterotetramer and two H2A-H2B heterodimers. The octamer wraps approximately 147 bp of DNA. In terms of processing, deiminated on Arg-4 in granulocytes upon calcium entry. Monoubiquitination of Lys-120 (H2AK119Ub) by RING1, TRIM37 and RNF2/RING2 complex gives a specific tag for epigenetic transcriptional repression and participates in X chromosome inactivation of female mammals. It is involved in the initiation of both imprinted and random X inactivation. Ubiquitinated H2A is enriched in inactive X chromosome chromatin. Ubiquitination of H2A functions downstream of methylation of 'Lys-27' of histone H3 (H3K27me). H2AK119Ub by RNF2/RING2 can also be induced by ultraviolet and may be involved in DNA repair. Monoubiquitination of Lys-120 (H2AK119Ub) by TRIM37 may promote transformation of cells in a number of breast cancers. Following DNA double-strand breaks (DSBs), it is ubiquitinated through 'Lys-63' linkage of ubiquitin moieties by the E2 ligase UBE2N and the E3 ligases RNF8 and RNF168, leading to the recruitment of repair proteins to sites of DNA damage. Ubiquitination at Lys-14 and Lys-16 (H2AK13Ub and H2AK15Ub, respectively) in response to DNA damage is initiated by RNF168 that mediates monoubiquitination at these 2 sites, and 'Lys-63'-linked ubiquitin are then conjugated to monoubiquitin; RNF8 is able to extend 'Lys-63'-linked ubiquitin chains in vitro. Deubiquitinated by USP51 at Lys-14 and Lys-16 (H2AK13Ub and H2AK15Ub, respectively) after damaged DNA is repaired. H2AK119Ub and ionizing radiation-induced 'Lys-63'-linked ubiquitination (H2AK13Ub and H2AK15Ub) are distinct events. Post-translationally, phosphorylation on Ser-2 (H2AS1ph) is enhanced during mitosis. Phosphorylation on Ser-2 by RPS6KA5/MSK1 directly represses transcription. Acetylation of H3 inhibits Ser-2 phosphorylation by RPS6KA5/MSK1. Phosphorylation at Thr-121 (H2AT120ph) by DCAF1 is present in the regulatory region of many tumor suppresor genes and down-regulates their transcription. In terms of processing, glutamine methylation at Gln-105 (H2AQ104me) by FBL is specifically dedicated to polymerase I. It is present at 35S ribosomal DNA locus and impairs binding of the FACT complex. Symmetric dimethylation on Arg-4 by the PRDM1/PRMT5 complex may play a crucial role in the germ-cell lineage. Post-translationally, crotonylation (Kcr) is specifically present in male germ cells and marks testis-specific genes in post-meiotic cells, including X-linked genes that escape sex chromosome inactivation in haploid cells. Crotonylation marks active promoters and enhancers and confers resistance to transcriptional repressors. It is also associated with post-meiotically activated genes on autosomes. In terms of processing, lactylated in macrophages by EP300/P300 by using lactoyl-CoA directly derived from endogenous or exogenous lactate, leading to stimulates gene transcription.

It is found in the nucleus. The protein resides in the chromosome. Functionally, core component of nucleosome. Nucleosomes wrap and compact DNA into chromatin, limiting DNA accessibility to the cellular machineries which require DNA as a template. Histones thereby play a central role in transcription regulation, DNA repair, DNA replication and chromosomal stability. DNA accessibility is regulated via a complex set of post-translational modifications of histones, also called histone code, and nucleosome remodeling. In Homo sapiens (Human), this protein is Histone H2A type 1-D.